The sequence spans 570 residues: Putative diflavin flavoprotein A 5 (570 aa).

The tract at residues 38-231 (ERGTTSNSYV…LQVRLYAVGH (194 aa)) is zinc metallo-hydrolase. The Flavodoxin-like domain maps to 260–402 (VALLYASAYG…VGTDFAQTLK (143 aa)). The tract at residues 421–570 (VGRIVGSVCV…INHRKTGNHY (150 aa)) is flavodoxin-reductase-like.

This sequence in the N-terminal section; belongs to the zinc metallo-hydrolase group 3 family. It in the C-terminal section; belongs to the flavodoxin reductase family. It depends on Fe cation as a cofactor.

Functionally, mediates electron transfer from NADH to oxygen, reducing it to water. This modular protein has 3 redox cofactors, in other organisms the same activity requires 2 or 3 proteins. The protein is Putative diflavin flavoprotein A 5 (dfa5) of Nostoc sp. (strain PCC 7120 / SAG 25.82 / UTEX 2576).